The following is a 541-amino-acid chain: uncharacterized protein (541 aa).

The next 6 helical transmembrane spans lie at 57–77 (LVVT…TIAI), 90–110 (LTFG…SYAL), 144–164 (VGHL…YGLI), 167–187 (AFIP…ATAT), 221–241 (MVVW…MAMF), and 257–277 (VLII…ILAW). In terms of domain architecture, HAMP spans 278–329 (LTATPVRVVRAALRRVERGELRTNLVVFDGTELGELQRGFNAMVAGLRERER). The region spanning 361–485 (AVVFIDIVGS…EPVNEAARLC (125 aa)) is the Guanylate cyclase domain.

It belongs to the adenylyl cyclase class-3 family.

Its subcellular location is the cell membrane. This is an uncharacterized protein from Mycobacterium tuberculosis (strain CDC 1551 / Oshkosh).